The chain runs to 115 residues: Large ribosomal subunit protein bL19 (115 aa).

Belongs to the bacterial ribosomal protein bL19 family.

Its function is as follows. This protein is located at the 30S-50S ribosomal subunit interface and may play a role in the structure and function of the aminoacyl-tRNA binding site. This Streptococcus pneumoniae (strain JJA) protein is Large ribosomal subunit protein bL19.